The following is a 23-amino-acid chain: Acetylcholine receptor subunit gamma (23 aa).

The protein belongs to the ligand-gated ion channel (TC 1.A.9) family. Acetylcholine receptor (TC 1.A.9.1) subfamily. Gamma/CHRNG sub-subfamily. Pentamer of two alpha chains, and one each of the beta, delta, and gamma chains.

Its subcellular location is the postsynaptic cell membrane. It is found in the cell membrane. It catalyses the reaction K(+)(in) = K(+)(out). The enzyme catalyses Na(+)(in) = Na(+)(out). After binding acetylcholine, the AChR responds by an extensive change in conformation that affects all subunits and leads to opening of an ion-conducting channel across the plasma membrane. This is Acetylcholine receptor subunit gamma (chrng) from Electrophorus electricus (Electric eel).